The chain runs to 494 residues: NADH-quinone oxidoreductase subunit N (494 aa).

Transmembrane regions (helical) follow at residues 9–29, 36–56, 73–93, 107–127, 131–151, 166–186, 209–229, 241–261, 278–298, 304–324, 339–359, 382–402, 416–436, and 469–489; these read VIPEIFLAAATCAILLIDLFL, LTYVLSLATLVVCAVLSLSDF, PMSNLLKFCTYIAVGLTLVYS, LGGEFYILSLFTVLGQMVMMS, FLIIYLGLEIMSLSLYALVAF, FVLGALASGFLLYGISMLYGA, LIFGLVFVVAGLAFKLGAVPF, PTAVTLMLGGAPKLAAFAITI, MLTILSVLSMAIGNITAIMQT, LAYSTISQVGFILLGLLSGVV, MFYVITYVLTTLGMFGVIMLL, FAFVTLLLMFSLAGVPPVVGF, GQIWLAVVAVLFSLIGAFYYL, and ALLALGLVPGPLMTACAAAII.

Belongs to the complex I subunit 2 family. NDH-1 is composed of 14 different subunits. Subunits NuoA, H, J, K, L, M, N constitute the membrane sector of the complex.

It localises to the cell inner membrane. The catalysed reaction is a quinone + NADH + 5 H(+)(in) = a quinol + NAD(+) + 4 H(+)(out). In terms of biological role, NDH-1 shuttles electrons from NADH, via FMN and iron-sulfur (Fe-S) centers, to quinones in the respiratory chain. The immediate electron acceptor for the enzyme in this species is believed to be ubiquinone. Couples the redox reaction to proton translocation (for every two electrons transferred, four hydrogen ions are translocated across the cytoplasmic membrane), and thus conserves the redox energy in a proton gradient. This is NADH-quinone oxidoreductase subunit N from Herminiimonas arsenicoxydans.